We begin with the raw amino-acid sequence, 281 residues long: Putative pyruvate, phosphate dikinase regulatory protein (281 aa).

150–157 contacts ADP; the sequence is GVSRTSKT.

This sequence belongs to the pyruvate, phosphate/water dikinase regulatory protein family. PDRP subfamily.

The catalysed reaction is N(tele)-phospho-L-histidyl/L-threonyl-[pyruvate, phosphate dikinase] + ADP = N(tele)-phospho-L-histidyl/O-phospho-L-threonyl-[pyruvate, phosphate dikinase] + AMP + H(+). The enzyme catalyses N(tele)-phospho-L-histidyl/O-phospho-L-threonyl-[pyruvate, phosphate dikinase] + phosphate + H(+) = N(tele)-phospho-L-histidyl/L-threonyl-[pyruvate, phosphate dikinase] + diphosphate. Bifunctional serine/threonine kinase and phosphorylase involved in the regulation of the pyruvate, phosphate dikinase (PPDK) by catalyzing its phosphorylation/dephosphorylation. The protein is Putative pyruvate, phosphate dikinase regulatory protein of Sorangium cellulosum (strain So ce56) (Polyangium cellulosum (strain So ce56)).